The sequence spans 598 residues: Vacuolin-A (598 aa).

Residues 482 to 539 (IKTTEARLKAETDNIALEQRNKAIISESQAKLSSAQREAESLLITAEAQKKASELQGE) are a coiled coil.

The protein belongs to the vacuolin family.

The protein resides in the endosome membrane. The protein localises to the lysosome. The protein is Vacuolin-A (vacA) of Dictyostelium discoideum (Social amoeba).